The primary structure comprises 196 residues: Probable peptidyl-prolyl cis-trans isomerase (196 aa).

Residues 1–26 (MSFIRSALAAAAFVALSIGAVQTASA) form the signal peptide. Positions 29 to 194 (PENTVILKLK…KIIKATIEAD (166 aa)) constitute a PPIase cyclophilin-type domain.

It belongs to the cyclophilin-type PPIase family.

It localises to the periplasm. The enzyme catalyses [protein]-peptidylproline (omega=180) = [protein]-peptidylproline (omega=0). Functionally, PPIases accelerate the folding of proteins. It catalyzes the cis-trans isomerization of proline imidic peptide bonds in oligopeptides. This Brucella melitensis biotype 1 (strain ATCC 23456 / CCUG 17765 / NCTC 10094 / 16M) protein is Probable peptidyl-prolyl cis-trans isomerase (ppi).